Here is a 715-residue protein sequence, read N- to C-terminus: Polyribonucleotide nucleotidyltransferase (715 aa).

2 residues coordinate Mg(2+): D485 and D491. One can recognise a KH domain in the interval 552–611 (PRIHTMKIDPKKIKDVIGKGGAVIRALTEETGTSIDIDDDGTVKIAATDNNAAKAVMARI). The 69-residue stretch at 621–689 (NAIYKGKVTR…RQNRIRLTMK (69 aa)) folds into the S1 motif domain. Positions 695 to 715 (TPVAENVTEEAEVSSEQQAEI) are disordered.

Belongs to the polyribonucleotide nucleotidyltransferase family. In terms of assembly, component of the RNA degradosome, which is a multiprotein complex involved in RNA processing and mRNA degradation. It depends on Mg(2+) as a cofactor.

It localises to the cytoplasm. It carries out the reaction RNA(n+1) + phosphate = RNA(n) + a ribonucleoside 5'-diphosphate. Functionally, involved in mRNA degradation. Catalyzes the phosphorolysis of single-stranded polyribonucleotides processively in the 3'- to 5'-direction. This chain is Polyribonucleotide nucleotidyltransferase, found in Actinobacillus pleuropneumoniae serotype 7 (strain AP76).